The primary structure comprises 117 residues: Zinc metalloproteinase/disintegrin (117 aa).

In terms of domain architecture, Disintegrin spans 36-117 (TPVSGNELLE…AGCPRNPFHA (82 aa)). 6 disulfides stabilise this stretch: Cys-50/Cys-65, Cys-52/Cys-60, Cys-59/Cys-82, Cys-73/Cys-79, Cys-78/Cys-103, and Cys-91/Cys-110. Positions 95–97 (RGD) match the Cell attachment site motif.

The protein belongs to the venom metalloproteinase (M12B) family. P-II subfamily. P-IIa sub-subfamily. In terms of assembly, monomer. Zn(2+) is required as a cofactor. Expressed by the venom gland.

Its subcellular location is the secreted. Impairs hemostasis in the envenomed animal. In terms of biological role, inhibits platelet aggregation and bone resorption. This Gloydius halys (Chinese water mocassin) protein is Zinc metalloproteinase/disintegrin.